The primary structure comprises 150 residues: Probable cyclic pyranopterin monophosphate synthase (150 aa).

Residues 68-70 and 104-105 each bind substrate; these read YCH and ME. Asp-119 is an active-site residue.

It belongs to the MoaC family. In terms of assembly, homohexamer; trimer of dimers.

The catalysed reaction is (8S)-3',8-cyclo-7,8-dihydroguanosine 5'-triphosphate = cyclic pyranopterin phosphate + diphosphate. It participates in cofactor biosynthesis; molybdopterin biosynthesis. In terms of biological role, catalyzes the conversion of (8S)-3',8-cyclo-7,8-dihydroguanosine 5'-triphosphate to cyclic pyranopterin monophosphate (cPMP). In Thermoplasma volcanium (strain ATCC 51530 / DSM 4299 / JCM 9571 / NBRC 15438 / GSS1), this protein is Probable cyclic pyranopterin monophosphate synthase.